We begin with the raw amino-acid sequence, 465 residues long: UDP-N-acetylmuramoylalanine--D-glutamate ligase (465 aa).

ATP is bound at residue 124-130 (GSDGKTT).

This sequence belongs to the MurCDEF family.

The protein localises to the cytoplasm. The enzyme catalyses UDP-N-acetyl-alpha-D-muramoyl-L-alanine + D-glutamate + ATP = UDP-N-acetyl-alpha-D-muramoyl-L-alanyl-D-glutamate + ADP + phosphate + H(+). It participates in cell wall biogenesis; peptidoglycan biosynthesis. Functionally, cell wall formation. Catalyzes the addition of glutamate to the nucleotide precursor UDP-N-acetylmuramoyl-L-alanine (UMA). The polypeptide is UDP-N-acetylmuramoylalanine--D-glutamate ligase (Ruminiclostridium cellulolyticum (strain ATCC 35319 / DSM 5812 / JCM 6584 / H10) (Clostridium cellulolyticum)).